The primary structure comprises 97 residues: Large ribosomal subunit protein eL21 (97 aa).

Positions 1-26 (MQKSEGFRSKTRYKLQKHPRQKGMAP) are disordered. Over residues 9–21 (SKTRYKLQKHPRQ) the composition is skewed to basic residues.

It belongs to the eukaryotic ribosomal protein eL21 family.

The chain is Large ribosomal subunit protein eL21 from Methanococcus maripaludis (strain C6 / ATCC BAA-1332).